The primary structure comprises 54 residues: UPF0391 membrane protein BMEI0373 (54 aa).

Transmembrane regions (helical) follow at residues Val-5 to Gly-25 and Gly-29 to Ala-48.

This sequence belongs to the UPF0391 family.

Its subcellular location is the cell membrane. This chain is UPF0391 membrane protein BMEI0373, found in Brucella melitensis biotype 1 (strain ATCC 23456 / CCUG 17765 / NCTC 10094 / 16M).